We begin with the raw amino-acid sequence, 557 residues long: Dihydroxy-acid dehydratase (557 aa).

Asp-78 is a binding site for Mg(2+). Cys-119 is a binding site for [2Fe-2S] cluster. Mg(2+) is bound by residues Asp-120 and Lys-121. Lys-121 bears the N6-carboxylysine mark. [2Fe-2S] cluster is bound at residue Cys-192. Position 442 (Glu-442) interacts with Mg(2+). Ser-468 serves as the catalytic Proton acceptor.

The protein belongs to the IlvD/Edd family. Homodimer. The cofactor is [2Fe-2S] cluster. It depends on Mg(2+) as a cofactor.

The enzyme catalyses (2R)-2,3-dihydroxy-3-methylbutanoate = 3-methyl-2-oxobutanoate + H2O. The catalysed reaction is (2R,3R)-2,3-dihydroxy-3-methylpentanoate = (S)-3-methyl-2-oxopentanoate + H2O. The protein operates within amino-acid biosynthesis; L-isoleucine biosynthesis; L-isoleucine from 2-oxobutanoate: step 3/4. Its pathway is amino-acid biosynthesis; L-valine biosynthesis; L-valine from pyruvate: step 3/4. Its function is as follows. Functions in the biosynthesis of branched-chain amino acids. Catalyzes the dehydration of (2R,3R)-2,3-dihydroxy-3-methylpentanoate (2,3-dihydroxy-3-methylvalerate) into 2-oxo-3-methylpentanoate (2-oxo-3-methylvalerate) and of (2R)-2,3-dihydroxy-3-methylbutanoate (2,3-dihydroxyisovalerate) into 2-oxo-3-methylbutanoate (2-oxoisovalerate), the penultimate precursor to L-isoleucine and L-valine, respectively. This Bacillus cereus (strain 03BB102) protein is Dihydroxy-acid dehydratase.